The chain runs to 194 residues: uncharacterized protein (194 aa).

The SIS domain occupies 34-192 (VMQCLLGGNK…CELVDQTLFP (159 aa)).

Belongs to the SIS family. DiaA subfamily.

This is an uncharacterized protein from Haemophilus influenzae (strain ATCC 51907 / DSM 11121 / KW20 / Rd).